A 415-amino-acid chain; its full sequence is MSILENFDPAVAHAIRVETERQEFNLELIASENFVSEAVMEAQGSVLTNKYAEGYPGKRYYGGCHNVDIVENLAIDRAKELFGAEHANVQPHSGSQANMAVYFTVLKPGDTVLGMNLAHGGHLTHGSPVNFSGKFFNIVPYGVTKESQTIDYAEVERLAVEHKPKMIVVGASAYPRTIDFAAFRKIADKVGAVVMVDMAHIAGLVAAGLHPSPVPHAEFVTTTTHKTLRGPRGGMILCREEFAKALNSNIFPGIQGGPLMHVIAAKAVAFKEALSPEFKQYQQQIVNNAKALAVALMKNGFKLTSGGTDNHLMLVDLSETPLTGKVAEEALDKAGITVNKNGIPFDTRSPFITSGIRIGTPAATTHGLKEPEMAQVAGFIADALANVDNDAKLAEIKGRVNTMMKQFPLYSSRLA.

Residues Leu-117 and 121 to 123 (GHL) contribute to the (6S)-5,6,7,8-tetrahydrofolate site. Lys-226 carries the N6-(pyridoxal phosphate)lysine modification. Residues Glu-241 and 349 to 351 (SPF) each bind (6S)-5,6,7,8-tetrahydrofolate.

The protein belongs to the SHMT family. Homodimer. It depends on pyridoxal 5'-phosphate as a cofactor.

It is found in the cytoplasm. It catalyses the reaction (6R)-5,10-methylene-5,6,7,8-tetrahydrofolate + glycine + H2O = (6S)-5,6,7,8-tetrahydrofolate + L-serine. It participates in one-carbon metabolism; tetrahydrofolate interconversion. The protein operates within amino-acid biosynthesis; glycine biosynthesis; glycine from L-serine: step 1/1. Catalyzes the reversible interconversion of serine and glycine with tetrahydrofolate (THF) serving as the one-carbon carrier. This reaction serves as the major source of one-carbon groups required for the biosynthesis of purines, thymidylate, methionine, and other important biomolecules. Also exhibits THF-independent aldolase activity toward beta-hydroxyamino acids, producing glycine and aldehydes, via a retro-aldol mechanism. The sequence is that of Serine hydroxymethyltransferase from Geotalea daltonii (strain DSM 22248 / JCM 15807 / FRC-32) (Geobacter daltonii).